We begin with the raw amino-acid sequence, 281 residues long: 4-diphosphocytidyl-2-C-methyl-D-erythritol kinase (281 aa).

Lysine 11 is an active-site residue. 92–102 (LVSAGLAGGSA) contributes to the ATP binding site. Aspartate 132 is an active-site residue.

It belongs to the GHMP kinase family. IspE subfamily.

The catalysed reaction is 4-CDP-2-C-methyl-D-erythritol + ATP = 4-CDP-2-C-methyl-D-erythritol 2-phosphate + ADP + H(+). It functions in the pathway isoprenoid biosynthesis; isopentenyl diphosphate biosynthesis via DXP pathway; isopentenyl diphosphate from 1-deoxy-D-xylulose 5-phosphate: step 3/6. Its function is as follows. Catalyzes the phosphorylation of the position 2 hydroxy group of 4-diphosphocytidyl-2C-methyl-D-erythritol. The protein is 4-diphosphocytidyl-2-C-methyl-D-erythritol kinase of Ehrlichia ruminantium (strain Gardel).